We begin with the raw amino-acid sequence, 243 residues long: Triosephosphate isomerase (243 aa).

Residue 9–11 coordinates substrate; sequence NWK. H96 functions as the Electrophile in the catalytic mechanism. E165 functions as the Proton acceptor in the catalytic mechanism. Substrate-binding positions include G171, S204, and 225–226; that span reads GG.

The protein belongs to the triosephosphate isomerase family. Homodimer.

Its subcellular location is the cytoplasm. It carries out the reaction D-glyceraldehyde 3-phosphate = dihydroxyacetone phosphate. The protein operates within carbohydrate biosynthesis; gluconeogenesis. Its pathway is carbohydrate degradation; glycolysis; D-glyceraldehyde 3-phosphate from glycerone phosphate: step 1/1. In terms of biological role, involved in the gluconeogenesis. Catalyzes stereospecifically the conversion of dihydroxyacetone phosphate (DHAP) to D-glyceraldehyde-3-phosphate (G3P). This is Triosephosphate isomerase from Synechococcus sp. (strain CC9902).